The following is a 430-amino-acid chain: Tol-Pal system protein TolB (430 aa).

Residues 1 to 21 (MKQAFRVALGFFLLWASVLHA) form the signal peptide.

The protein belongs to the TolB family. As to quaternary structure, the Tol-Pal system is composed of five core proteins: the inner membrane proteins TolA, TolQ and TolR, the periplasmic protein TolB and the outer membrane protein Pal. They form a network linking the inner and outer membranes and the peptidoglycan layer.

It localises to the periplasm. Part of the Tol-Pal system, which plays a role in outer membrane invagination during cell division and is important for maintaining outer membrane integrity. TolB occupies a key intermediary position in the Tol-Pal system because it communicates directly with both membrane-embedded components, Pal in the outer membrane and TolA in the inner membrane. The protein is Tol-Pal system protein TolB of Sodalis glossinidius (strain morsitans).